The sequence spans 423 residues: Gamma-glutamyl phosphate reductase (423 aa).

It belongs to the gamma-glutamyl phosphate reductase family.

The protein resides in the cytoplasm. It catalyses the reaction L-glutamate 5-semialdehyde + phosphate + NADP(+) = L-glutamyl 5-phosphate + NADPH + H(+). Its pathway is amino-acid biosynthesis; L-proline biosynthesis; L-glutamate 5-semialdehyde from L-glutamate: step 2/2. Catalyzes the NADPH-dependent reduction of L-glutamate 5-phosphate into L-glutamate 5-semialdehyde and phosphate. The product spontaneously undergoes cyclization to form 1-pyrroline-5-carboxylate. The polypeptide is Gamma-glutamyl phosphate reductase (Paraburkholderia phytofirmans (strain DSM 17436 / LMG 22146 / PsJN) (Burkholderia phytofirmans)).